The chain runs to 495 residues: Hydroxyneurosporene desaturase (495 aa).

It belongs to the carotenoid/retinoid oxidoreductase family.

It carries out the reaction rhodopin + A = (3E)-3,4-didehydrorhodopin + AH2. Its pathway is carotenoid biosynthesis; spheroidene biosynthesis. Its function is as follows. Catalyzes the introduction of C-3,4 double bonds into 1-hydroxyneurosporene (1-HO-Neu) to yield demethylspheroidene (DMS). It prefer the acyclic carotenoids such as 1-hydroxylycopene, and 1-hydroxy-gamma-carotene, whereas 1-hydroxy-3,4-didehydrolycopene and 1,1-dihydroxylycopene are much less effective. The polypeptide is Hydroxyneurosporene desaturase (crtD) (Cereibacter sphaeroides (strain ATCC 17023 / DSM 158 / JCM 6121 / CCUG 31486 / LMG 2827 / NBRC 12203 / NCIMB 8253 / ATH 2.4.1.) (Rhodobacter sphaeroides)).